A 64-amino-acid chain; its full sequence is Large ribosomal subunit protein bL33 (64 aa).

The disordered stretch occupies residues 19–40 (TSTDPKRSNGVSRYTTEKNRRN).

This sequence belongs to the bacterial ribosomal protein bL33 family.

The chain is Large ribosomal subunit protein bL33 from Prochlorococcus marinus (strain MIT 9215).